The primary structure comprises 355 residues: tRNA-specific 2-thiouridylase MnmA (355 aa).

Residues 8-15 and M34 each bind ATP; that span reads GMSGGVDS. C103 (nucleophile) is an active-site residue. Residues C103 and C199 are joined by a disulfide bond. An ATP-binding site is contributed by G127. The tract at residues 149–151 is interaction with tRNA; it reads KDQ. C199 acts as the Cysteine persulfide intermediate in catalysis. The segment at 305 to 306 is interaction with tRNA; the sequence is RY.

The protein belongs to the MnmA/TRMU family.

Its subcellular location is the cytoplasm. It catalyses the reaction S-sulfanyl-L-cysteinyl-[protein] + uridine(34) in tRNA + AH2 + ATP = 2-thiouridine(34) in tRNA + L-cysteinyl-[protein] + A + AMP + diphosphate + H(+). Catalyzes the 2-thiolation of uridine at the wobble position (U34) of tRNA, leading to the formation of s(2)U34. The polypeptide is tRNA-specific 2-thiouridylase MnmA (Clostridium acetobutylicum (strain ATCC 824 / DSM 792 / JCM 1419 / IAM 19013 / LMG 5710 / NBRC 13948 / NRRL B-527 / VKM B-1787 / 2291 / W)).